The primary structure comprises 261 residues: Small ribosomal subunit protein eS4 (261 aa).

The 59-residue stretch at 42–100 folds into the S4 RNA-binding domain; it reads LPLILILRNRLKYALTYREVVSILMQRHILVDGKIHFCIRLSDVVSIPKTNENFRLLYD.

This sequence belongs to the eukaryotic ribosomal protein eS4 family.

It localises to the cytoplasm. This Prunus armeniaca (Apricot) protein is Small ribosomal subunit protein eS4 (RPS4).